A 510-amino-acid polypeptide reads, in one-letter code: Calcium-dependent lipid-binding protein (510 aa).

The helical transmembrane segment at M1–W21 threads the bilayer. SMP-LTD domains lie at A66–G248 and A66–I250. A phospholipid binding region spans residues D226–S488. C2 domains lie at R242–L362 and P246–L364. Ca(2+)-binding residues include K278, E279, D285, D333, K334, D335, D339, and E340. The stretch at E390 to G417 forms a coiled coil. In terms of domain architecture, C2 3 spans M461–T500. The segment at I484–Q510 is disordered.

It belongs to the synaptotagmin family. Interacts with the biotrophic pathogenic fungi Microbotryum violaceum effector MVLG_01732. The cofactor is Ca(2+). As to expression, mostly expressed in rosette leaves and flowers, to lower extent, in cauline leaves, roots and stems, and, at low levels, in siliques.

The protein localises to the nucleus membrane. Functionally, may be involved in membrane trafficking. Acts as a repressor of abiotic stress (e.g. drought and salt) responses by binding specifically to the promoter of THAS1 to regulate its transcription. Binds to membrane lipid ceramides. This is Calcium-dependent lipid-binding protein from Arabidopsis thaliana (Mouse-ear cress).